The following is a 386-amino-acid chain: Succinate--CoA ligase [ADP-forming] subunit beta (386 aa).

An ATP-grasp domain is found at 9–244 (KALFREHGIP…ETQEDAREAR (236 aa)). Residues Lys46, 53–55 (GRG), Glu99, Thr102, and Glu107 each bind ATP. Mg(2+) contacts are provided by Asn199 and Asp213. Substrate contacts are provided by residues Asn264 and 321 to 323 (GIV).

This sequence belongs to the succinate/malate CoA ligase beta subunit family. As to quaternary structure, heterotetramer of two alpha and two beta subunits. Mg(2+) is required as a cofactor.

It catalyses the reaction succinate + ATP + CoA = succinyl-CoA + ADP + phosphate. The catalysed reaction is GTP + succinate + CoA = succinyl-CoA + GDP + phosphate. Its pathway is carbohydrate metabolism; tricarboxylic acid cycle; succinate from succinyl-CoA (ligase route): step 1/1. Succinyl-CoA synthetase functions in the citric acid cycle (TCA), coupling the hydrolysis of succinyl-CoA to the synthesis of either ATP or GTP and thus represents the only step of substrate-level phosphorylation in the TCA. The beta subunit provides nucleotide specificity of the enzyme and binds the substrate succinate, while the binding sites for coenzyme A and phosphate are found in the alpha subunit. This is Succinate--CoA ligase [ADP-forming] subunit beta from Thioalkalivibrio sulfidiphilus (strain HL-EbGR7).